The sequence spans 367 residues: 3-dehydroquinate synthase (367 aa).

NAD(+) is bound by residues 72–77, 106–110, 130–131, lysine 143, lysine 152, and 170–173; these read DGENYK, GVIGD, TT, and FLST. 3 residues coordinate Zn(2+): glutamate 185, histidine 248, and histidine 265.

This sequence belongs to the sugar phosphate cyclases superfamily. Dehydroquinate synthase family. It depends on Co(2+) as a cofactor. Zn(2+) serves as cofactor. NAD(+) is required as a cofactor.

It is found in the cytoplasm. The enzyme catalyses 7-phospho-2-dehydro-3-deoxy-D-arabino-heptonate = 3-dehydroquinate + phosphate. It participates in metabolic intermediate biosynthesis; chorismate biosynthesis; chorismate from D-erythrose 4-phosphate and phosphoenolpyruvate: step 2/7. Catalyzes the conversion of 3-deoxy-D-arabino-heptulosonate 7-phosphate (DAHP) to dehydroquinate (DHQ). The polypeptide is 3-dehydroquinate synthase (Buchnera aphidicola subsp. Cinara cedri (strain Cc)).